The primary structure comprises 494 residues: GTPase Der (494 aa).

EngA-type G domains lie at Pro-3 to Glu-166 and Ile-207 to Thr-380. Residues Gly-9–Ser-16, Asp-56–Ile-60, Asn-118–Asp-121, Gly-213–Ser-220, Asp-260–Val-264, and Asn-325–Asp-328 contribute to the GTP site. Positions Lys-381 to Glu-465 constitute a KH-like domain.

The protein belongs to the TRAFAC class TrmE-Era-EngA-EngB-Septin-like GTPase superfamily. EngA (Der) GTPase family. Associates with the 50S ribosomal subunit.

Functionally, GTPase that plays an essential role in the late steps of ribosome biogenesis. The protein is GTPase Der of Yersinia enterocolitica serotype O:8 / biotype 1B (strain NCTC 13174 / 8081).